The chain runs to 323 residues: Di/tripeptide transport ATP-binding protein DppF (323 aa).

One can recognise an ABC transporter domain in the interval 5–254; sequence LTARDLTRHY…PLHPYTRALL (250 aa). ATP is bound at residue 47–54; that stretch reads GESGCGKS.

The protein belongs to the ABC transporter superfamily. The complex is composed of two ATP-binding proteins (DppD and DppF), two transmembrane proteins (DppB and DppC) and a solute-binding protein (DppA1-A5). Five orthologous SBPs (DppA1-A5) are present in P.aeruginosa, which increases the substrate specificity of the DppBCDF transporter.

It localises to the cell inner membrane. The enzyme catalyses a dipeptide(out) + ATP + H2O = a dipeptide(in) + ADP + phosphate + H(+). Functionally, part of the ABC transporter DppABCDF involved in the uptake of various di/tripeptides. Is also involved in the uptake of phaseolotoxin, a toxic tripeptide inhibiting the enzyme ornithine carbamoyltransferase. Responsible for energy coupling to the transport system. This Pseudomonas aeruginosa (strain UCBPP-PA14) protein is Di/tripeptide transport ATP-binding protein DppF.